A 533-amino-acid chain; its full sequence is NEDD8-activating enzyme E1 regulatory subunit (533 aa).

Residues 330–343 form an interaction with uba3 region; that stretch reads DMIADSDKFIKLQN.

Belongs to the ubiquitin-activating E1 family. ULA1 subfamily. In terms of assembly, heterodimer of uba3 and nae1. The complex binds nedd8 and ube2m.

Its pathway is protein modification; protein neddylation. Functionally, regulatory subunit of the dimeric uba3-nae1 E1 enzyme. E1 activates nedd8 by first adenylating its C-terminal glycine residue with ATP, thereafter linking this residue to the side chain of the catalytic cysteine, yielding a nedd8-uba3 thioester and free AMP. E1 finally transfers nedd8 to the catalytic cysteine of ube2m. The covalent attachment of nedd8 to target proteins is known as 'neddylation' and the process is involved in the regulation of cell growth, viability and development. In Xenopus laevis (African clawed frog), this protein is NEDD8-activating enzyme E1 regulatory subunit (nae1).